The following is a 232-amino-acid chain: Large ribosomal subunit protein uL1 (232 aa).

The protein belongs to the universal ribosomal protein uL1 family. Part of the 50S ribosomal subunit.

In terms of biological role, binds directly to 23S rRNA. The L1 stalk is quite mobile in the ribosome, and is involved in E site tRNA release. Functionally, protein L1 is also a translational repressor protein, it controls the translation of the L11 operon by binding to its mRNA. This Bacillus velezensis (strain DSM 23117 / BGSC 10A6 / LMG 26770 / FZB42) (Bacillus amyloliquefaciens subsp. plantarum) protein is Large ribosomal subunit protein uL1.